The primary structure comprises 389 residues: Type 2 DNA topoisomerase 6 subunit A (389 aa).

Residues 12-162 (EARRKAANIL…MLILSKEKGK (151 aa)) form the Topo IIA-type catalytic domain. Catalysis depends on Y106, which acts as the O-(5'-phospho-DNA)-tyrosine intermediate. Mg(2+)-binding residues include E209 and D261.

Belongs to the TOP6A family. As to quaternary structure, homodimer. Heterotetramer of two Top6A and two Top6B chains. Mg(2+) serves as cofactor.

It catalyses the reaction ATP-dependent breakage, passage and rejoining of double-stranded DNA.. With respect to regulation, not inhibited by the DNA gyrase inhibitor novobiocin, instead inhibited by eukaryotic topoisomerase inhibitors such as m- and o-amsacrine, ellipticine, and the quinolone CP-115,953. Its function is as follows. Relaxes both positive and negative supercoils and exhibits a strong decatenase and unknotting activity; it cannot introduce DNA supercoils. ATP is absolutely required for DNA cleavage; the nonhydrolyzable analog AMP-PNP generates nicked or linear products from a supercoiled dsDNA substrate. Generates staggered two-nucleotide long 5' overhangs. The enzyme is covalently attached transiently to the 5'-ends of the cleaved strands. This chain is Type 2 DNA topoisomerase 6 subunit A, found in Saccharolobus shibatae (strain ATCC 51178 / DSM 5389 / JCM 8931 / NBRC 15437 / B12) (Sulfolobus shibatae).